A 341-amino-acid polypeptide reads, in one-letter code: MKAEIEELQRSFGEIRLFPENSDDLWHLHNLITPGSLVYATTLRSVEGSQDKIRPEKQEKRPVRLGIRVEDVEFHEYSIRLRVFGTIESGVDIGSHHTLNLEPGYEISVIKSWSGSDLERIDRAIKGSTSEAIHILTVEEGEAELYRVQSYGPKQVWSLAAGSGKTAEVSSREEFSEAVVSQVSQLTGPLVIAGPGFVKEEIIAKFKRKNPSRSAPLVIGDTRAGGRRAVQEVIGQGILEKLNGDLQLAREVTCLDELMRRIGKDEPVAYGIDAVRDATGCGAVQTLMVVDTLLRDPDAADLIRQAEAMRSEVVIFSSRFEPGERLAGLGGIAALLRYSIA.

The protein belongs to the eukaryotic release factor 1 family. Pelota subfamily. Monomer. A divalent metal cation serves as cofactor.

The protein resides in the cytoplasm. Functionally, may function in recognizing stalled ribosomes, interact with stem-loop structures in stalled mRNA molecules, and effect endonucleolytic cleavage of the mRNA. May play a role in the release non-functional ribosomes and degradation of damaged mRNAs. Has endoribonuclease activity. In Methanospirillum hungatei JF-1 (strain ATCC 27890 / DSM 864 / NBRC 100397 / JF-1), this protein is Protein pelota homolog.